A 549-amino-acid chain; its full sequence is Calcium-dependent protein kinase 5 (549 aa).

The N-myristoyl glycine moiety is linked to residue Gly-2. The tract at residues Asp-43–Gly-69 is disordered. Over residues Arg-52–Ala-64 the composition is skewed to low complexity. Positions Tyr-92–Ile-350 constitute a Protein kinase domain. ATP contacts are provided by residues Leu-98–Thr-106 and Lys-121. The Proton acceptor role is filled by Asp-216. The tract at residues Ala-356–Ile-386 is autoinhibitory domain. EF-hand domains follow at residues Glu-393–Thr-428, Leu-429–Leu-464, Glu-465–Pro-500, and Asp-501–Gly-534. Asp-406, Asp-408, Ser-410, Glu-417, Asp-442, Asp-444, Ser-446, Thr-448, Glu-453, Asp-478, Asp-480, Ser-482, Tyr-484, Glu-489, Asp-512, Asp-514, Asp-516, Arg-518, and Glu-523 together coordinate Ca(2+).

It belongs to the protein kinase superfamily. Ser/Thr protein kinase family. CDPK subfamily.

Its subcellular location is the membrane. It carries out the reaction L-seryl-[protein] + ATP = O-phospho-L-seryl-[protein] + ADP + H(+). The enzyme catalyses L-threonyl-[protein] + ATP = O-phospho-L-threonyl-[protein] + ADP + H(+). Activated by calcium. Autophosphorylation may play an important role in the regulation of the kinase activity. May play a role in signal transduction pathways that involve calcium as a second messenger. The chain is Calcium-dependent protein kinase 5 from Oryza sativa subsp. japonica (Rice).